The sequence spans 421 residues: UDP-N-acetylglucosamine 1-carboxyvinyltransferase (421 aa).

Lys-22–Asn-23 is a binding site for phosphoenolpyruvate. Arg-93 contacts UDP-N-acetyl-alpha-D-glucosamine. Cys-117 serves as the catalytic Proton donor. A 2-(S-cysteinyl)pyruvic acid O-phosphothioketal modification is found at Cys-117. Residues Arg-122 to Leu-126, Asp-308, and Ile-330 contribute to the UDP-N-acetyl-alpha-D-glucosamine site.

It belongs to the EPSP synthase family. MurA subfamily.

Its subcellular location is the cytoplasm. The enzyme catalyses phosphoenolpyruvate + UDP-N-acetyl-alpha-D-glucosamine = UDP-N-acetyl-3-O-(1-carboxyvinyl)-alpha-D-glucosamine + phosphate. It functions in the pathway cell wall biogenesis; peptidoglycan biosynthesis. Its function is as follows. Cell wall formation. Adds enolpyruvyl to UDP-N-acetylglucosamine. This is UDP-N-acetylglucosamine 1-carboxyvinyltransferase from Pseudomonas entomophila (strain L48).